We begin with the raw amino-acid sequence, 381 residues long: Pentatricopeptide repeat-containing protein 2, mitochondrial (381 aa).

Residues 157–191 (DTTSFNITIDMLFNKQLYESGLEVVGEMKKQGVSL) form a PPR repeat.

The protein belongs to the PTCD2 family.

It localises to the mitochondrion. In terms of biological role, involved in mitochondrial RNA maturation and mitochondrial respiratory chain function. The chain is Pentatricopeptide repeat-containing protein 2, mitochondrial (ptcd2) from Danio rerio (Zebrafish).